Consider the following 308-residue polypeptide: Exosporium protein A (308 aa).

It is found in the spore wall. In Clostridium sporogenes (strain ATCC 15579), this protein is Exosporium protein A.